A 333-amino-acid chain; its full sequence is uncharacterized protein (333 aa).

Residues 94 to 122 (NLYREVWRELEEEQNKVEKLREYILKLDS) adopt a coiled-coil conformation.

This is an uncharacterized protein from Aquifex aeolicus (strain VF5).